Here is a 318-residue protein sequence, read N- to C-terminus: Taste receptor type 2 member 60 (318 aa).

Over 1–7 (MNGDHMV) the chain is Extracellular. A helical membrane pass occupies residues 8–28 (LGSSVTDKKAIILVTILLLLR). Topologically, residues 29-40 (LVAIAGNGFITA) are cytoplasmic. A helical transmembrane segment spans residues 41 to 61 (ALGVEWVLRRMLLPCDKLLVS). Residues 62–88 (LGASRFCLQSVVMGKTIYVFLHPMAFP) lie on the Extracellular side of the membrane. Residues 89–109 (YNPVLQFLAFQWDFLNAATLW) traverse the membrane as a helical segment. Residues 110–128 (SSTWLSVFYCVKIATFTHP) are Cytoplasmic-facing. The chain crosses the membrane as a helical span at residues 129–149 (VFFWLKHKLSGWLPWMLFSSV). Topologically, residues 150-183 (GLSSFTTILFFIGNHRMYQNYLRNHLQPWNVTGD) are extracellular. N-linked (GlcNAc...) asparagine glycosylation occurs at Asn-179. Residues 184-204 (SIRSYCEKFYLFPLKMITWTM) traverse the membrane as a helical segment. At 205 to 234 (PTAVFFICMILLITSLGRHRKKALLTTSGF) the chain is on the cytoplasmic side. A helical membrane pass occupies residues 235 to 255 (REPSVQAHIKALLALLSFAML). The Extracellular portion of the chain corresponds to 256–264 (FISYFLSLV). Residues 265–285 (FSAAGIFPPLDFKFWVWESVI) traverse the membrane as a helical segment. The Cytoplasmic portion of the chain corresponds to 286 to 318 (YLCAAVHPIILLFSNCRLRAVLKSRRSSRCGTP).

Belongs to the G-protein coupled receptor T2R family. Expressed in subsets of taste receptor cells of the tongue and exclusively in gustducin-positive cells.

Its subcellular location is the membrane. In terms of biological role, receptor that may play a role in the perception of bitterness and is gustducin-linked. May play a role in sensing the chemical composition of the gastrointestinal content. The activity of this receptor may stimulate alpha gustducin, mediate PLC-beta-2 activation and lead to the gating of TRPM5. This chain is Taste receptor type 2 member 60 (TAS2R60), found in Homo sapiens (Human).